Reading from the N-terminus, the 387-residue chain is Sulfoacetaldehyde reductase (387 aa).

Belongs to the iron-containing alcohol dehydrogenase family.

The enzyme catalyses 2-hydroxyethane-1-sulfonate + NAD(+) = sulfoacetaldehyde + NADH + H(+). Its pathway is organosulfur degradation; alkanesulfonate degradation. In terms of biological role, involved in an anaerobic respiration pathway that converts the sulfonate taurine (2-aminoethanesulfonate) to ammonia, acetate and sulfide. Catalyzes the NADH-dependent reduction of sulfoacetaldehyde to 2-hydroxyethane-1-sulfonate (isethionate). Does not accept acetaldehyde as a substrate. This Bilophila wadsworthia (strain 3_1_6) protein is Sulfoacetaldehyde reductase.